The following is a 137-amino-acid chain: Putative pre-16S rRNA nuclease (137 aa).

Belongs to the YqgF nuclease family.

Its subcellular location is the cytoplasm. Could be a nuclease involved in processing of the 5'-end of pre-16S rRNA. The polypeptide is Putative pre-16S rRNA nuclease (Anaeromyxobacter sp. (strain K)).